A 372-amino-acid chain; its full sequence is Glutamate 5-kinase (372 aa).

K14 lines the ATP pocket. Residues S54, D141, and N153 each contribute to the substrate site. 173-174 provides a ligand contact to ATP; sequence TD. The region spanning 280–358 is the PUA domain; that stretch reads RGTLVLDDGA…DAIEALLGYV (79 aa).

The protein belongs to the glutamate 5-kinase family.

The protein resides in the cytoplasm. The catalysed reaction is L-glutamate + ATP = L-glutamyl 5-phosphate + ADP. The protein operates within amino-acid biosynthesis; L-proline biosynthesis; L-glutamate 5-semialdehyde from L-glutamate: step 1/2. Functionally, catalyzes the transfer of a phosphate group to glutamate to form L-glutamate 5-phosphate. This Pseudomonas aeruginosa (strain UCBPP-PA14) protein is Glutamate 5-kinase.